Here is a 268-residue protein sequence, read N- to C-terminus: Eukaryotic translation initiation factor 3 subunit J (268 aa).

Disordered stretches follow at residues 1 to 117 (MTPS…DLKH) and 219 to 242 (NEKM…KTKV). Acidic residues predominate over residues 26–44 (DEEDEEVLDSWDAAEDSEV). A coiled-coil region spans residues 40-95 (EDSEVEREKAAKAAEAKAKAEAEAAAKKKSKAQRIEEHKAERRKNAEADSEEDEDE). Basic and acidic residues-rich tracts occupy residues 45 to 65 (EREK…EAAA) and 72 to 86 (QRIE…KNAE). Acidic residues predominate over residues 87–99 (ADSEEDEDEDEDE). Composition is skewed to basic and acidic residues over residues 100–117 (AEKR…DLKH) and 220–232 (EKMR…DKGS).

The protein belongs to the eIF-3 subunit J family. In terms of assembly, component of the eukaryotic translation initiation factor 3 (eIF-3) complex.

The protein localises to the cytoplasm. In terms of biological role, component of the eukaryotic translation initiation factor 3 (eIF-3) complex, which is involved in protein synthesis of a specialized repertoire of mRNAs and, together with other initiation factors, stimulates binding of mRNA and methionyl-tRNAi to the 40S ribosome. The eIF-3 complex specifically targets and initiates translation of a subset of mRNAs involved in cell proliferation. This Aspergillus clavatus (strain ATCC 1007 / CBS 513.65 / DSM 816 / NCTC 3887 / NRRL 1 / QM 1276 / 107) protein is Eukaryotic translation initiation factor 3 subunit J (hcr1).